Reading from the N-terminus, the 213-residue chain is MGKVLTMAMPKGRIFEEAAGLLRQAGYRLPEEFEESRKLIIDVPEENLRFILAKPMDVTTYVEHGVADAGIAGKDVMLEEERDVYEVLDLKISKCHLAVAGLPGADWNGVAPRIATKYPNVASSYFREQGEQVEIIKLNGSIELAPLIGLADRIVDIVSTGRTLKENGLVESEHICDITSRFIVNPVSYRMKDDVIDEMAARLARVVEGETAQ.

The protein belongs to the ATP phosphoribosyltransferase family. Short subfamily. As to quaternary structure, heteromultimer composed of HisG and HisZ subunits.

Its subcellular location is the cytoplasm. The catalysed reaction is 1-(5-phospho-beta-D-ribosyl)-ATP + diphosphate = 5-phospho-alpha-D-ribose 1-diphosphate + ATP. The protein operates within amino-acid biosynthesis; L-histidine biosynthesis; L-histidine from 5-phospho-alpha-D-ribose 1-diphosphate: step 1/9. In terms of biological role, catalyzes the condensation of ATP and 5-phosphoribose 1-diphosphate to form N'-(5'-phosphoribosyl)-ATP (PR-ATP). Has a crucial role in the pathway because the rate of histidine biosynthesis seems to be controlled primarily by regulation of HisG enzymatic activity. This is ATP phosphoribosyltransferase from Bacillus velezensis (strain DSM 23117 / BGSC 10A6 / LMG 26770 / FZB42) (Bacillus amyloliquefaciens subsp. plantarum).